The primary structure comprises 206 residues: Small ribosomal subunit protein uS4 (206 aa).

In terms of domain architecture, S4 RNA-binding spans 96 to 156 (GRLDNVVYRM…EKAKKQSRVK (61 aa)).

It belongs to the universal ribosomal protein uS4 family. In terms of assembly, part of the 30S ribosomal subunit. Contacts protein S5. The interaction surface between S4 and S5 is involved in control of translational fidelity.

In terms of biological role, one of the primary rRNA binding proteins, it binds directly to 16S rRNA where it nucleates assembly of the body of the 30S subunit. Functionally, with S5 and S12 plays an important role in translational accuracy. The chain is Small ribosomal subunit protein uS4 from Serratia proteamaculans (strain 568).